A 635-amino-acid polypeptide reads, in one-letter code: Threonine--tRNA ligase (635 aa).

One can recognise a TGS domain in the interval 1–61 (MITVRLPDGS…EKDSDLAIIT (61 aa)). The tract at residues 242–533 (DHRKLGKQLD…LIEHYAGALP (292 aa)) is catalytic. Zn(2+) contacts are provided by C333, H384, and H510.

The protein belongs to the class-II aminoacyl-tRNA synthetase family. In terms of assembly, homodimer. The cofactor is Zn(2+).

It is found in the cytoplasm. The catalysed reaction is tRNA(Thr) + L-threonine + ATP = L-threonyl-tRNA(Thr) + AMP + diphosphate + H(+). In terms of biological role, catalyzes the attachment of threonine to tRNA(Thr) in a two-step reaction: L-threonine is first activated by ATP to form Thr-AMP and then transferred to the acceptor end of tRNA(Thr). Also edits incorrectly charged L-seryl-tRNA(Thr). This is Threonine--tRNA ligase from Janthinobacterium sp. (strain Marseille) (Minibacterium massiliensis).